Consider the following 1366-residue polypeptide: DNA-directed RNA polymerase subunit beta'' (1366 aa).

Cys220, Cys290, Cys297, and Cys300 together coordinate Zn(2+).

This sequence belongs to the RNA polymerase beta' chain family. RpoC2 subfamily. In terms of assembly, in plastids the minimal PEP RNA polymerase catalytic core is composed of four subunits: alpha, beta, beta', and beta''. When a (nuclear-encoded) sigma factor is associated with the core the holoenzyme is formed, which can initiate transcription. Requires Zn(2+) as cofactor.

It localises to the plastid. It is found in the chloroplast. The catalysed reaction is RNA(n) + a ribonucleoside 5'-triphosphate = RNA(n+1) + diphosphate. Its function is as follows. DNA-dependent RNA polymerase catalyzes the transcription of DNA into RNA using the four ribonucleoside triphosphates as substrates. This Lemna minor (Common duckweed) protein is DNA-directed RNA polymerase subunit beta''.